Consider the following 419-residue polypeptide: Peptide chain release factor subunit 1 (419 aa).

Belongs to the eukaryotic release factor 1 family. Heterodimer of two subunits, one of which binds GTP.

The protein localises to the cytoplasm. Functionally, directs the termination of nascent peptide synthesis (translation) in response to the termination codons UAA, UAG and UGA. This chain is Peptide chain release factor subunit 1, found in Methanococcus maripaludis (strain C5 / ATCC BAA-1333).